Here is a 329-residue protein sequence, read N- to C-terminus: DNA-directed RNA polymerase subunit alpha (329 aa).

Positions 1–235 (MQGSVTEFLK…EQLDAFVDLR (235 aa)) are alpha N-terminal domain (alpha-NTD). Residues 249 to 329 (FDPILLRPVD…NWPPASIAED (81 aa)) are alpha C-terminal domain (alpha-CTD).

The protein belongs to the RNA polymerase alpha chain family. As to quaternary structure, homodimer. The RNAP catalytic core consists of 2 alpha, 1 beta, 1 beta' and 1 omega subunit. When a sigma factor is associated with the core the holoenzyme is formed, which can initiate transcription.

It catalyses the reaction RNA(n) + a ribonucleoside 5'-triphosphate = RNA(n+1) + diphosphate. Its function is as follows. DNA-dependent RNA polymerase catalyzes the transcription of DNA into RNA using the four ribonucleoside triphosphates as substrates. The sequence is that of DNA-directed RNA polymerase subunit alpha from Histophilus somni (strain 129Pt) (Haemophilus somnus).